The sequence spans 553 residues: Coiled-coil domain-containing protein 22 homolog (553 aa).

The segment at 236–264 (DSEEPAPPPISTVKPDASAEEEASPIQEL) is disordered. 3 coiled-coil regions span residues 261-286 (IQELSDQVEELRVQCETLLAERKAHA), 314-407 (ERTS…QSLA), and 498-549 (NVTK…VEQP).

Belongs to the CCDC22 family.

The protein is Coiled-coil domain-containing protein 22 homolog of Drosophila erecta (Fruit fly).